A 177-amino-acid chain; its full sequence is Deoxyuridine 5'-triphosphate nucleotidohydrolase (177 aa).

Residues arginine 83–glycine 85, asparagine 96, threonine 100–aspartate 102, and lysine 110 contribute to the substrate site. The span at aspartate 150–asparagine 163 shows a compositional bias: polar residues. The segment at aspartate 150–lysine 177 is disordered. A compositionally biased stretch (gly residues) spans arginine 166 to lysine 177.

This sequence belongs to the dUTPase family. Mg(2+) serves as cofactor.

It carries out the reaction dUTP + H2O = dUMP + diphosphate + H(+). It functions in the pathway pyrimidine metabolism; dUMP biosynthesis; dUMP from dCTP (dUTP route): step 2/2. Its function is as follows. This enzyme is involved in nucleotide metabolism: it produces dUMP, the immediate precursor of thymidine nucleotides and it decreases the intracellular concentration of dUTP so that uracil cannot be incorporated into DNA. In Bartonella bacilliformis (strain ATCC 35685 / KC583 / Herrer 020/F12,63), this protein is Deoxyuridine 5'-triphosphate nucleotidohydrolase.